A 94-amino-acid polypeptide reads, in one-letter code: Small ribosomal subunit protein bS6 (94 aa).

The protein belongs to the bacterial ribosomal protein bS6 family.

Functionally, binds together with bS18 to 16S ribosomal RNA. This is Small ribosomal subunit protein bS6 from Fusobacterium nucleatum subsp. nucleatum (strain ATCC 25586 / DSM 15643 / BCRC 10681 / CIP 101130 / JCM 8532 / KCTC 2640 / LMG 13131 / VPI 4355).